Reading from the N-terminus, the 165-residue chain is Transmembrane protein 253 (165 aa).

Transmembrane regions (helical) follow at residues 31–51, 60–80, and 91–111; these read LVLA…AVSV, MTTA…IVTL, and LAGL…GVLV. Residues 145–165 form a disordered region; sequence EEVPELETGPTVASTAKRTNQ. The segment covering 155–165 has biased composition (polar residues); sequence TVASTAKRTNQ.

Its subcellular location is the membrane. The chain is Transmembrane protein 253 (TMEM253) from Bos taurus (Bovine).